Reading from the N-terminus, the 217-residue chain is GrpE protein homolog 1, mitochondrial (217 aa).

A mitochondrion-targeting transit peptide spans 1 to 27 (MAARCVRLARRSLPALALSFRPSPRLL). The tract at residues 37–56 (GQNLDEDLGHCEPKTDPPSA) is disordered. The residue at position 94 (lysine 94) is an N6-acetyllysine; alternate. Lysine 94 carries the N6-succinyllysine; alternate modification. An N6-acetyllysine modification is found at lysine 100. Residue lysine 120 is modified to N6-succinyllysine. Residue lysine 215 is modified to N6-acetyllysine; alternate. Lysine 215 is subject to N6-succinyllysine; alternate.

It belongs to the GrpE family. In terms of assembly, probable component of the PAM complex at least composed of a mitochondrial HSP70 protein, GRPEL1 or GRPEL2, TIMM44, TIMM16/PAM16 and TIMM14/DNAJC19. Binds to HSP70, HSC70 and HSJ1B.

The protein localises to the mitochondrion matrix. Its function is as follows. Essential component of the PAM complex, a complex required for the translocation of transit peptide-containing proteins from the inner membrane into the mitochondrial matrix in an ATP-dependent manner. Seems to control the nucleotide-dependent binding of mitochondrial HSP70 to substrate proteins. In Mus musculus (Mouse), this protein is GrpE protein homolog 1, mitochondrial (Grpel1).